Here is a 131-residue protein sequence, read N- to C-terminus: Large ribosomal subunit protein bL17 (131 aa).

The protein belongs to the bacterial ribosomal protein bL17 family. Part of the 50S ribosomal subunit. Contacts protein L32.

The polypeptide is Large ribosomal subunit protein bL17 (Bordetella parapertussis (strain 12822 / ATCC BAA-587 / NCTC 13253)).